The sequence spans 106 residues: uncharacterized protein (106 aa).

Transmembrane regions (helical) follow at residues 3 to 23 (WFLL…MKYI), 29 to 49 (KWPI…LSQA), 50 to 70 (MIVL…SIGV), and 82 to 102 (FQLS…GLRL).

This sequence belongs to the drug/metabolite transporter (DMT) superfamily. Small multidrug resistance (SMR) (TC 2.A.7.1) family.

The protein localises to the cell membrane. This is an uncharacterized protein from Bacillus subtilis (strain 168).